A 649-amino-acid polypeptide reads, in one-letter code: Alpha-amylase (649 aa).

Glu-124 functions as the Nucleophile in the catalytic mechanism. The active-site Proton donor is the Asp-215.

This sequence belongs to the glycosyl hydrolase 57 family. As to quaternary structure, homodimer.

The catalysed reaction is Endohydrolysis of (1-&gt;4)-alpha-D-glucosidic linkages in polysaccharides containing three or more (1-&gt;4)-alpha-linked D-glucose units.. Functionally, displays a broad range of substrate specificity, with the capacity to hydrolyze carbohydrates as simple as maltotriose. This Pyrococcus furiosus (strain ATCC 43587 / DSM 3638 / JCM 8422 / Vc1) protein is Alpha-amylase (amyA).